The chain runs to 116 residues: Protein Wnt-5a (116 aa).

S1 carries the O-palmitoleoyl serine; by PORCN lipid modification. N-linked (GlcNAc...) asparagine glycosylation is found at N69 and N83. A disulfide bridge connects residues C82 and C97.

The protein belongs to the Wnt family. Palmitoleoylation is required for efficient binding to frizzled receptors. Depalmitoleoylation leads to Wnt signaling pathway inhibition.

It localises to the secreted. The protein localises to the extracellular space. Its subcellular location is the extracellular matrix. In terms of biological role, ligand for members of the frizzled family of seven transmembrane receptors. Can activate or inhibit canonical Wnt signaling, depending on receptor context. Required during embryogenesis for extension of the primary anterior-posterior axis. The sequence is that of Protein Wnt-5a (WNT-5A) from Plestiodon skiltonianus (Western skink).